The sequence spans 274 residues: HTH-type transcriptional regulator GadX (274 aa).

One can recognise an HTH araC/xylS-type domain in the interval 145–242 (TRVCTVINNN…GMTPTEYQER (98 aa)). DNA-binding regions (H-T-H motif) lie at residues 162 to 183 (ARIA…REEE) and 209 to 232 (IKRV…RNYY).

As to quaternary structure, homodimer.

Positively regulates the expression of about fifteen genes involved in acid resistance such as gadA, gadB and gadC. Depending on the conditions (growth phase and medium), can repress gadW. The polypeptide is HTH-type transcriptional regulator GadX (gadX) (Escherichia coli O157:H7).